We begin with the raw amino-acid sequence, 96 residues long: MSRRCELTGKAVLTGHLVSHSNRKTKRRFLPNLCKVTLLSDTLGRSVRLRISANALRSVEHRGGLDAFLVKAGEQELSQNARLLKREIEKKLAEAA.

It belongs to the bacterial ribosomal protein bL28 family.

The sequence is that of Large ribosomal subunit protein bL28 from Methylobacterium nodulans (strain LMG 21967 / CNCM I-2342 / ORS 2060).